The sequence spans 359 residues: Type-1 angiotensin II receptor A (359 aa).

At 1–25 (MALNSSAEDGIKRIQDDCPKAGRHS) the chain is on the extracellular side. Asn-4 carries an N-linked (GlcNAc...) asparagine glycan. Angiotensin II-binding residues include Gln-15 and Asp-17. Cystine bridges form between Cys-18–Cys-274 and Cys-101–Cys-180. The chain crosses the membrane as a helical span at residues 26–55 (YIFVMIPTLYSIIFVVGIFGNSLVVIVIYF). The Cytoplasmic segment spans residues 56 to 61 (YMKLKT). A helical transmembrane segment spans residues 62–89 (VASVFLLNLALADLCFLLTLPLWAVYTA). The Extracellular segment spans residues 90-98 (MEYRWPFGN). A helical transmembrane segment spans residues 99–125 (HLCKIASASVSFNLYASVFLLTCLSID). Over 126–141 (RYLAIVHPMKSRLRRT) the chain is Cytoplasmic. A helical membrane pass occupies residues 142–165 (MLVAKVTCIIIWLMAGLASLPAVI). The Extracellular segment spans residues 166–190 (HRNVYFIENTNITVCAFHYESRNST). Arg-167 provides a ligand contact to angiotensin II. The N-linked (GlcNAc...) asparagine glycan is linked to Asn-176. Residues Phe-182, His-183, and Tyr-184 each contribute to the angiotensin II site. N-linked (GlcNAc...) asparagine glycosylation is present at Asn-188. The helical transmembrane segment at 191–216 (LPIGLGLTKNILGFLFPFLIILTSYT) threads the bilayer. Lys-199 provides a ligand contact to angiotensin II. At 217-239 (LIWKALKKAYEIQKNKPRNDDIF) the chain is on the cytoplasmic side. The chain crosses the membrane as a helical span at residues 240–268 (RIIMAIVLFFFFSWVPHQIFTFLDVLIQL). Residues 269 to 278 (GVIHDCKISD) lie on the Extracellular side of the membrane. A helical transmembrane segment spans residues 279-304 (IVDTAMPITICIAYFNNCLNPLFYGF). Topologically, residues 305 to 359 (LGKKFKKYFLQLLKYIPPKAKSHSSLSTKMSTLSYRPSDNMSSSAKKPASCFEVE) are cytoplasmic. Over residues 337 to 349 (LSYRPSDNMSSSA) the composition is skewed to polar residues. Residues 337–359 (LSYRPSDNMSSSAKKPASCFEVE) are disordered. Residue Cys-355 is the site of S-palmitoyl cysteine attachment.

This sequence belongs to the G-protein coupled receptor 1 family. In terms of assembly, interacts with MAS1. Interacts with ARRB1. Interacts with FLNA (via filamin repeat 21); increases PKA-mediated phosphorylation of FLNA. In terms of processing, C-terminal Ser or Thr residues may be phosphorylated. Is expressed in the liver, kidney, aorta, lung, uterus, ovary, spleen, heart, adrenal gland, and vascular smooth muscle cell.

The protein resides in the cell membrane. In terms of biological role, receptor for angiotensin II, a vasoconstricting peptide, which acts as a key regulator of blood pressure and sodium retention by the kidney. The activated receptor in turn couples to G-alpha proteins G(q) (GNAQ, GNA11, GNA14 or GNA15) and thus activates phospholipase C and increases the cytosolic Ca(2+) concentrations, which in turn triggers cellular responses such as stimulation of protein kinase C. This chain is Type-1 angiotensin II receptor A (Agtr1), found in Rattus norvegicus (Rat).